Reading from the N-terminus, the 415-residue chain is Gamma-glutamyl phosphate reductase 1 (415 aa).

The protein belongs to the gamma-glutamyl phosphate reductase family.

It localises to the cytoplasm. It carries out the reaction L-glutamate 5-semialdehyde + phosphate + NADP(+) = L-glutamyl 5-phosphate + NADPH + H(+). Its pathway is amino-acid biosynthesis; L-proline biosynthesis; L-glutamate 5-semialdehyde from L-glutamate: step 2/2. Functionally, catalyzes the NADPH-dependent reduction of L-glutamate 5-phosphate into L-glutamate 5-semialdehyde and phosphate. The product spontaneously undergoes cyclization to form 1-pyrroline-5-carboxylate. This chain is Gamma-glutamyl phosphate reductase 1, found in Bacillus licheniformis (strain ATCC 14580 / DSM 13 / JCM 2505 / CCUG 7422 / NBRC 12200 / NCIMB 9375 / NCTC 10341 / NRRL NRS-1264 / Gibson 46).